The primary structure comprises 226 residues: Cytidylate kinase (226 aa).

Residue 10-18 (GPASSGKST) coordinates ATP.

The protein belongs to the cytidylate kinase family. Type 1 subfamily.

It localises to the cytoplasm. It carries out the reaction CMP + ATP = CDP + ADP. The enzyme catalyses dCMP + ATP = dCDP + ADP. The chain is Cytidylate kinase from Streptococcus equi subsp. zooepidemicus (strain MGCS10565).